We begin with the raw amino-acid sequence, 27 residues long: C-reactive protein P1 (27 aa).

The tract at residues 1–27 (IPQDLSGKMLTFPKEEDDDDVKLMTPK) is disordered. The Pentraxin (PTX) domain maps to 6–27 (SGKMLTFPKEEDDDDVKLMTPK).

The protein belongs to the pentraxin family. In terms of assembly, homopentamer. Pentraxin (or pentaxin) have a discoid arrangement of 5 non-covalently bound subunits. Exists as a dimer under reducing conditions. Ca(2+) serves as cofactor. Glycosylated.

It localises to the secreted. Displays several functions associated with host defense: it promotes agglutination, bacterial capsular swelling, phagocytosis, and complement fixation through its calcium-dependent binding to phosphorylcholine. The polypeptide is C-reactive protein P1 (Gadus morhua (Atlantic cod)).